Reading from the N-terminus, the 195-residue chain is SPbeta prophage-derived uncharacterized protein YotM (195 aa).

The polypeptide is SPbeta prophage-derived uncharacterized protein YotM (yotM) (Bacillus subtilis (strain 168)).